A 758-amino-acid polypeptide reads, in one-letter code: Glucocorticoid receptor (758 aa).

Disordered stretches follow at residues 1 to 61 (MDPG…SANG) and 349 to 382 (GMSS…PSGP). The segment at 1–386 (MDPGGLKHSK…AKPSGPTHKI (386 aa)) is modulating. Residues 26–42 (GSFSGDTGGSKSTTSTS) are compositionally biased toward low complexity. 2 consecutive NR C4-type zinc fingers follow at residues 387–407 (CLVC…CGSC) and 432–456 (CAGR…FRKC). The nuclear receptor DNA-binding region spans 387 to 461 (CLVCSDEASG…RFRKCLQAGM (75 aa)). Residues 462 to 498 (NLEARKNKKLIRLKGQQTTMEPNPPPPDERACALIPK) are hinge. Positions 499–733 (SMPQLVPTML…FPEMLAEIIS (235 aa)) constitute an NR LBD domain.

It belongs to the nuclear hormone receptor family. NR3 subfamily. Heteromultimeric cytoplasmic complex with HSP90AA1, HSPA1A/HSPA1B, and FKBP5 or another immunophilin such as PPID, STIP1, or the immunophilin homolog PPP5C. Upon ligand binding FKBP5 dissociates from the complex and FKBP4 takes its place, thereby linking the complex to dynein and mediating transport to the nucleus, where the complex dissociates. Directly interacts with UNC45A. Binds to DNA as a homodimer, and as heterodimer with NR3C2 or the retinoid X receptor. Binds STAT5A and STAT5B homodimers and heterodimers. Interacts with NRIP1, POU2F1, POU2F2 and TRIM28. Interacts with several coactivator complexes, including the SMARCA4 complex, CREBBP/EP300, TADA2L (Ada complex) and p160 coactivators such as NCOA2 and NCOA6. Interaction with BAG1 inhibits transactivation. Interacts with HEXIM1, PELP1 and TGFB1I1. Interacts with NCOA1, NCOA3, SMARCA4, SMARCC1, SMARCD1, and SMARCE1. Post-translationally, phosphorylated in the absence of hormone; becomes hyperphosphorylated in the presence of glucocorticoids. May be dephosphorylated by PPP5C, attenuates NR3C1 action. In terms of tissue distribution, isoform 1 is expressed in all tissues tested including liver, gills, intestine, skeletal muscle, kidney, heart, spleen, stomach, brain, pituitary, ovary, testis, skin and bladder. Isoform 2 is found only in testis.

Its subcellular location is the cytoplasm. The protein resides in the nucleus. It localises to the mitochondrion. It is found in the cytoskeleton. The protein localises to the spindle. Its subcellular location is the microtubule organizing center. The protein resides in the centrosome. Receptor for glucocorticoids (GC). Has a dual mode of action: as a transcription factor that binds to glucocorticoid response elements (GRE), both for nuclear and mitochondrial DNA, and as a modulator of other transcription factors. Affects inflammatory responses, cellular proliferation and differentiation in target tissues. Involved in chromatin remodeling. Plays a role in rapid mRNA degradation by binding to the 5' UTR of target mRNAs and interacting with PNRC2 in a ligand-dependent manner which recruits the RNA helicase UPF1 and the mRNA-decapping enzyme DCP1A, leading to RNA decay. Could act as a coactivator for STAT5-dependent transcription upon growth hormone (GH) stimulation and could reveal an essential role of hepatic GR in the control of body growth. Mediates glucocorticoid-induced apoptosis. Promotes accurate chromosome segregation during mitosis. May act as a tumor suppressor. May play a negative role in adipogenesis through the regulation of lipolytic and antilipogenic gene expression. The polypeptide is Glucocorticoid receptor (nr3c1) (Oncorhynchus mykiss (Rainbow trout)).